The sequence spans 167 residues: Endoribonuclease YbeY (167 aa).

Zn(2+) is bound by residues histidine 131, histidine 135, and histidine 141.

The protein belongs to the endoribonuclease YbeY family. Requires Zn(2+) as cofactor.

The protein resides in the cytoplasm. In terms of biological role, single strand-specific metallo-endoribonuclease involved in late-stage 70S ribosome quality control and in maturation of the 3' terminus of the 16S rRNA. The sequence is that of Endoribonuclease YbeY from Rickettsia akari (strain Hartford).